The primary structure comprises 535 residues: MEILRFLLSLFIYFLLLNLSLSHFPSISAQRTNHENFLKCLSHRINEDDSRIIHTSKDPSYFSILNSSIQNPRFFVLETPKPVSIITPVQATDVQSTIKCARLHGIHIRTRSGGHDYEGLSYMAKSRPFVVIDLRNLRSITLDVDNRTGWVQSGATIGELYYEIGKLSKSLAFPAGLYPTVGIGGQFGGGGYGTLMRKYGLSADNVIDAHIVDANGSFLDRQGMGEDFFWAIRGGGGSSFSVVLSWKIRLLDVPSVVTVFKVVKTSEKEAVSIINKWQYIADKVPNDLFIRAMLQKETEVYASFPGLYLGPVSDLLALMKDKFPELGLEIGNCREMSWIESVLWFIKGESMEILAKRKRTSRSFKGKDDFIEEPIPKTAIQYLWRRFEAPEARLAKIILTPFGGKMSEIADNEIPFPHREGNLYEIQYLAYWSEEEDKNKTNTEKYLRWVESVYEFMTPYVSKSPRRAYVNFRDIDLGMYLGLNMKTKYEEAKVWGVKYFKNNFDRLVRVKTNVDPMDFFCDEQSIPIMKYVNDI.

An N-terminal signal peptide occupies residues 1–22 (MEILRFLLSLFIYFLLLNLSLS). Residues Asn-18 and Asn-66 are each glycosylated (N-linked (GlcNAc...) asparagine). A disulfide bridge connects residues Cys-40 and Cys-100. An FAD-binding PCMH-type domain is found at 78–253 (ETPKPVSIIT…LSWKIRLLDV (176 aa)). His-115 carries the post-translational modification Pros-8alpha-FAD histidine. 3 N-linked (GlcNAc...) asparagine glycosylation sites follow: Asn-146, Asn-215, and Asn-439.

It belongs to the oxygen-dependent FAD-linked oxidoreductase family. FAD is required as a cofactor. In terms of tissue distribution, accumulates in cell walls of etiolated hypocotyls.

It localises to the secreted. The protein resides in the cell wall. This chain is Berberine bridge enzyme-like 27, found in Arabidopsis thaliana (Mouse-ear cress).